Reading from the N-terminus, the 642-residue chain is Chaperone protein HtpG (642 aa).

The segment at Met-1–Arg-348 is a; substrate-binding. The segment at Glu-349 to Arg-564 is b. The tract at residues Met-565 to Val-642 is c.

The protein belongs to the heat shock protein 90 family. Homodimer.

It localises to the cytoplasm. Its function is as follows. Molecular chaperone. Has ATPase activity. The polypeptide is Chaperone protein HtpG (Rhodococcus jostii (strain RHA1)).